The sequence spans 405 residues: Argininosuccinate synthase (405 aa).

ATP-binding positions include 11–19 and A38; that span reads AYSGGLDTS. L-citrulline-binding residues include Y91 and S96. Position 121 (G121) interacts with ATP. L-aspartate is bound by residues T123, N127, and D128. Position 127 (N127) interacts with L-citrulline. Positions 131, 181, 190, 266, and 278 each coordinate L-citrulline.

This sequence belongs to the argininosuccinate synthase family. Type 1 subfamily. In terms of assembly, homotetramer.

The protein localises to the cytoplasm. The enzyme catalyses L-citrulline + L-aspartate + ATP = 2-(N(omega)-L-arginino)succinate + AMP + diphosphate + H(+). Its pathway is amino-acid biosynthesis; L-arginine biosynthesis; L-arginine from L-ornithine and carbamoyl phosphate: step 2/3. The protein is Argininosuccinate synthase of Nitratiruptor sp. (strain SB155-2).